Consider the following 265-residue polypeptide: Anamorsin homolog (265 aa).

The tract at residues 1–147 (MDAAKMYGAV…WKIGSSFALK (147 aa)) is N-terminal SAM-like domain. The interval 147 to 176 (KKVVKSSPKVQIDFDSDLIDENSLLSEEDL) is linker. [2Fe-2S] cluster-binding residues include C186, C195, C198, and C200. The segment at 186–200 (CEIGPTRKACKNCSC) is fe-S binding site A. Positions 226, 229, 237, and 240 each coordinate [4Fe-4S] cluster. 2 short sequence motifs (cx2C motif) span residues 226 to 229 (CGSC) and 237 to 240 (CSTC). The tract at residues 226 to 240 (CGSCGLGDAFRCSTC) is fe-S binding site B.

It belongs to the anamorsin family. As to quaternary structure, monomer. [2Fe-2S] cluster is required as a cofactor. [4Fe-4S] cluster serves as cofactor.

It is found in the cytoplasm. It localises to the mitochondrion intermembrane space. Component of the cytosolic iron-sulfur (Fe-S) protein assembly (CIA) machinery. Required for the maturation of extramitochondrial Fe-S proteins. Part of an electron transfer chain functioning in an early step of cytosolic Fe-S biogenesis, facilitating the de novo assembly of a [4Fe-4S] cluster on the cytosolic Fe-S scaffold complex. Electrons are transferred from NADPH via a FAD- and FMN-containing diflavin oxidoreductase. Together with the diflavin oxidoreductase, also required for the assembly of the diferric tyrosyl radical cofactor of ribonucleotide reductase (RNR), probably by providing electrons for reduction during radical cofactor maturation in the catalytic small subunit. This chain is Anamorsin homolog, found in Medicago truncatula (Barrel medic).